A 123-amino-acid polypeptide reads, in one-letter code: Small ribosomal subunit protein uS12 (123 aa).

Positions M1 to K30 are disordered. The span at R9–S21 shows a compositional bias: basic residues. D89 carries the post-translational modification 3-methylthioaspartic acid. The disordered stretch occupies residues T104–K123. The span at R110–K123 shows a compositional bias: basic residues.

This sequence belongs to the universal ribosomal protein uS12 family. As to quaternary structure, part of the 30S ribosomal subunit. Contacts proteins S8 and S17. May interact with IF1 in the 30S initiation complex.

With S4 and S5 plays an important role in translational accuracy. In terms of biological role, interacts with and stabilizes bases of the 16S rRNA that are involved in tRNA selection in the A site and with the mRNA backbone. Located at the interface of the 30S and 50S subunits, it traverses the body of the 30S subunit contacting proteins on the other side and probably holding the rRNA structure together. The combined cluster of proteins S8, S12 and S17 appears to hold together the shoulder and platform of the 30S subunit. In Jannaschia sp. (strain CCS1), this protein is Small ribosomal subunit protein uS12.